Here is a 758-residue protein sequence, read N- to C-terminus: Probable serine/threonine-protein kinase HAL5-like (758 aa).

2 disordered regions span residues 1 to 170 and 189 to 252; these read MGTV…SADD and IDNA…HRGR. The span at 22 to 57 shows a compositional bias: polar residues; sequence RSISGSIKSLFKPSSVQNSTPTVSPHESSPPLGNSD. Positions 58–69 are enriched in basic and acidic residues; it reads NLKKLVDTKRAE. The segment covering 129 to 153 has biased composition (low complexity); it reads SSPRQSSSTNDRSSITSATSSVTSA. Residues 216–226 show a composition bias toward basic and acidic residues; that stretch reads DKNFESSEYEI. The segment covering 227-247 has biased composition (polar residues); sequence RSNSLSRIHSTPQNESPTVNN. Positions 442 to 744 constitute a Protein kinase domain; that stretch reads KSMGVVLGHG…IDQLLQSPWM (303 aa). Residues 448–456 and Lys485 each bind ATP; that span reads LGHGAYGVV. Asp595 functions as the Proton acceptor in the catalytic mechanism.

It belongs to the protein kinase superfamily. CAMK Ser/Thr protein kinase family. NPR/HAL subfamily. HAL5 sub-subfamily.

It carries out the reaction L-seryl-[protein] + ATP = O-phospho-L-seryl-[protein] + ADP + H(+). The enzyme catalyses L-threonyl-[protein] + ATP = O-phospho-L-threonyl-[protein] + ADP + H(+). The sequence is that of Probable serine/threonine-protein kinase HAL5-like from Vanderwaltozyma polyspora (strain ATCC 22028 / DSM 70294 / BCRC 21397 / CBS 2163 / NBRC 10782 / NRRL Y-8283 / UCD 57-17) (Kluyveromyces polysporus).